Consider the following 342-residue polypeptide: Alanine racemase (342 aa).

The active-site Proton acceptor; specific for D-alanine is the K33. K33 bears the N6-(pyridoxal phosphate)lysine mark. Residue R128 participates in substrate binding. Y240 serves as the catalytic Proton acceptor; specific for L-alanine. M288 provides a ligand contact to substrate.

It belongs to the alanine racemase family. The cofactor is pyridoxal 5'-phosphate.

It carries out the reaction L-alanine = D-alanine. The protein operates within amino-acid biosynthesis; D-alanine biosynthesis; D-alanine from L-alanine: step 1/1. Catalyzes the interconversion of L-alanine and D-alanine. May also act on other amino acids. The polypeptide is Alanine racemase (alr) (Jannaschia sp. (strain CCS1)).